The primary structure comprises 398 residues: Cystathionine gamma-lyase (398 aa).

Position 50 is a phosphoserine (Ser50). The substrate site is built by Arg61, Tyr113, and Arg118. Lys211 is modified (N6-(pyridoxal phosphate)lysine). Glu338 lines the substrate pocket.

Belongs to the trans-sulfuration enzymes family. Homotetramer. Interacts with CALM in a calcium-dependent manner. It depends on pyridoxal 5'-phosphate as a cofactor.

The protein localises to the cytoplasm. It carries out the reaction L,L-cystathionine + H2O = 2-oxobutanoate + L-cysteine + NH4(+). The enzyme catalyses L-homoserine = 2-oxobutanoate + NH4(+). It catalyses the reaction L-selenocystathionine + H2O = L-selenocysteine + 2-oxobutanoate + NH4(+). The catalysed reaction is L-cysteine + H2O = hydrogen sulfide + pyruvate + NH4(+) + H(+). It carries out the reaction L-homocysteine + H2O = 2-oxobutanoate + hydrogen sulfide + NH4(+) + H(+). It functions in the pathway amino-acid biosynthesis; L-cysteine biosynthesis; L-cysteine from L-homocysteine and L-serine: step 2/2. Catalyzes the last step in the trans-sulfuration pathway from L-methionine to L-cysteine in a pyridoxal-5'-phosphate (PLP)-dependent manner, which consists on cleaving the L,L-cystathionine molecule into L-cysteine, ammonia and 2-oxobutanoate. Part of the L-cysteine derived from the trans-sulfuration pathway is utilized for biosynthesis of the ubiquitous antioxidant glutathione. Besides its role in the conversion of L-cystathionine into L-cysteine, it utilizes L-cysteine and L-homocysteine as substrates (at much lower rates than L,L-cystathionine) to produce hydrogen sulfide (H2S). In vitro, it converts two L-cysteine molecules into lanthionine and H2S, and two L-homocysteine molecules to homolanthionine and H2S, which can be particularly relevant under conditions of severe hyperhomocysteinemia. Lanthionine and homolanthionine are structural homologs of L,L-cystathionine that differ by the absence or presence of an extra methylene group, respectively. Acts as a cysteine-protein sulfhydrase by mediating sulfhydration of target proteins: sulfhydration consists of converting -SH groups into -SSH on specific cysteine residues of target proteins such as GAPDH, PTPN1 and NF-kappa-B subunit RELA, thereby regulating their function. By generating the gasotransmitter H2S, it participates in a number of physiological processes such as vasodilation, bone protection, and inflammation. Plays an essential role in myogenesis by contributing to the biogenesis of H2S in skeletal muscle tissue. Can also accept homoserine as substrate. Catalyzes the elimination of selenocystathionine (which can be derived from the diet) to yield selenocysteine, ammonia and 2-oxobutanoate. The polypeptide is Cystathionine gamma-lyase (Cth) (Rattus norvegicus (Rat)).